Reading from the N-terminus, the 851-residue chain is M-phase phosphoprotein 8 (851 aa).

Residues 21–54 are disordered; the sequence is NIGRSPEVEGGGAAGEEKDAATKGTVAVGDSEED. Phosphoserine occurs at positions 51, 85, and 136. The 60-residue stretch at 59 to 118 folds into the Chromo domain; the sequence is FEVERILDMKCEGGKNLYKVRWKGYTSDDDTWEPEVHLEDCKEVLLEFRKKVAENKAKAV. The tract at residues 80-87 is histone H3K9me3 binding; it reads WKGYTSDD. Residues 133–174 are disordered; sequence EADSDIDQQGDTKEDTSPRKKKKKIKYKEDKSPDDLRKKRAK. Thr-144 carries the phosphothreonine modification. Ser-149 and Ser-164 each carry phosphoserine; by CDK1. Positions 159 to 169 are enriched in basic and acidic residues; sequence YKEDKSPDDLR. Residues Ser-188, Ser-263, Ser-267, and Ser-274 each carry the phosphoserine modification. The disordered stretch occupies residues 240–302; the sequence is REDVKDNRKT…KTGQDTVQES (63 aa). Residues 269 to 278 show a composition bias toward acidic residues; sequence TLEDESEDFL. Over residues 279 to 295 the composition is skewed to basic and acidic residues; that stretch reads SDNKEKQNVRTAKDKTG. A Phosphoserine modification is found at Ser-313. A disordered region spans residues 315 to 428; that stretch reads EEAGTRVRRK…DKEEKARKEP (114 aa). Basic and acidic residues predominate over residues 329–364; sequence RKFEEPKEIKKLENTNNFLERKMIPKKQRNQDKGRS. Position 379 is a phosphothreonine; by CDK1 (Thr-379). 2 positions are modified to phosphoserine: Ser-386 and Ser-394. Positions 401 to 428 are enriched in basic and acidic residues; the sequence is EKERKNEPKEKYQKRYDFDKEEKARKEP. A Phosphothreonine modification is found at Thr-447. 4 ANK repeats span residues 591 to 620, 624 to 653, 657 to 686, and 690 to 719; these read TGMTLVMLAAAGGQDDLLRLLITKGAKVNG, NGTTALIHAAEKNFLTTVAILLEAGAFVNV, NGETALMKACKRGNSDIVRLVIECGADCNI, and HQNSALYFAKQCNNVLVYELLKSHLETLSR.

In terms of assembly, homodimer. Interacts (via chromo domain) with histone H3K9me3. Has the highest affinity for H3K9me3, and lesser affinity for H3K9me2 and H3K9me1. Component of the HUSH complex; at least composed of TASOR, PPHLN1 and MPHOSPH8. Interacts with DNMT3, EHMT1 and SETDB1. Interacts with MORC2; the interaction associateS MORC2 with the HUSH complex which recruits MORC2 to heterochromatic loci. Interacts with ZNF638; leading to recruitment of the HUSH complex to unintegrated retroviral DNA. Interacts with TASOR. In terms of processing, phosphorylated in M (mitotic) phase. Phosphorylation by CDK1 promotes dissociation from chromatin.

The protein resides in the nucleus. Its subcellular location is the chromosome. Its function is as follows. Heterochromatin component that specifically recognizes and binds methylated 'Lys-9' of histone H3 (H3K9me) and promotes recruitment of proteins that mediate epigenetic repression. Mediates recruitment of the HUSH complex to H3K9me3 sites: the HUSH complex is recruited to genomic loci rich in H3K9me3 and is required to maintain transcriptional silencing by promoting recruitment of SETDB1, a histone methyltransferase that mediates further deposition of H3K9me3, as well as MORC2. Binds H3K9me and promotes DNA methylation by recruiting DNMT3A to target CpG sites; these can be situated within the coding region of the gene. Mediates down-regulation of CDH1 expression. Also represses L1 retrotransposons in collaboration with MORC2 and, probably, SETDB1, the silencing is dependent of repressive epigenetic modifications, such as H3K9me3 mark. Silencing events often occur within introns of transcriptionally active genes, and lead to the down-regulation of host gene expression. The HUSH complex is also involved in the silencing of unintegrated retroviral DNA by being recruited by ZNF638: some part of the retroviral DNA formed immediately after infection remains unintegrated in the host genome and is transcriptionally repressed. The sequence is that of M-phase phosphoprotein 8 from Rattus norvegicus (Rat).